A 107-amino-acid polypeptide reads, in one-letter code: Large ribosomal subunit protein uL23 (107 aa).

It belongs to the universal ribosomal protein uL23 family. As to quaternary structure, part of the 50S ribosomal subunit. Contacts protein L29, and trigger factor when it is bound to the ribosome.

One of the early assembly proteins it binds 23S rRNA. One of the proteins that surrounds the polypeptide exit tunnel on the outside of the ribosome. Forms the main docking site for trigger factor binding to the ribosome. The sequence is that of Large ribosomal subunit protein uL23 from Rhodopirellula baltica (strain DSM 10527 / NCIMB 13988 / SH1).